The chain runs to 860 residues: MLGQLVGGLIGGHHDSKKVKGTVVMMKKNALDFTDLAGSLTDKIFEALGQKVSFQLISSVQSDPANGLQGKHSNPAYLENFLLTLTPLAAGETAFGVTFDWNEEFGVPGAFVIKNMHINEFFLKSLTLEDVPNHGKVHFVCNSWVYPSFRYKSDRIFFANQPYLPSETPELLRKYRENELVTLRGDGTGKREAWDRIYDYDVYNDLGNPDQGKENVRTTLGGSADYPYPRRGRTGRPPTRTDPKSESRIPLILSLDIYVPRDERFGHLKMSDFLTYALKSIVQFILPELHALFDGTPNEFDSFEDVLRLYEGGIKLPQGPLFKALTDAIPLEMIRELLRTDGEGILRFPTPLVIKDSKTAWRTDEEFAREMLAGVNPVIISRLEEFPPKSKLDPELYGNQNSTITAEHIEGKLDGLTIDEAINSNKLFILNHHDVLIPYLRRINTTTTKTYASRTLLFLQDNGSLKPLAIELSLPHPDGDQFGVTSKVYTPSDQGVEGSIWQLAKAYVAVNDSGVHQLISHWLNTHAVIEPFVIATNRQLSVLHPIHKLLYPHFRDTMNINALARQILINAGGVLESTVFPSKFAMEMSAVVYKDWVFPDQALPADLVKRGVAVEDSSSPHGVRLLIDDYPYAVDGLEIWSAIKSWVTDYCSFYYGSNEEILKDNELQAWWKEVREVGHGDKKNEPWWAEMETPQELIDSCTTIIWIASALHAAVNFGQYPYAGYLPNRPTVSRKFMPEPGTPEYEELKKNPDKAFLKTITAQLQTLLGVSLIEILSRHTTDEIYLGQRESPEWTKDKEPLAAFERFGNKLTDIEKQIMQRNGNNILTNRTGPVNAPYTLLFPTSEGGLTGKGIPNSVSI.

In terms of domain architecture, PLAT spans 29–159; it reads NALDFTDLAG…RYKSDRIFFA (131 aa). The Lipoxygenase domain occupies 162 to 860; that stretch reads PYLPSETPEL…GKGIPNSVSI (699 aa). The segment at 209–246 is disordered; it reads PDQGKENVRTTLGGSADYPYPRRGRTGRPPTRTDPKSE. Histidine 521, histidine 526, histidine 712, asparagine 716, and isoleucine 860 together coordinate Fe cation.

The protein belongs to the lipoxygenase family. As to quaternary structure, monomer. It depends on Fe cation as a cofactor. Expressed in germinating seeds as well as in ripening fruit.

The protein resides in the cytoplasm. It carries out the reaction (9Z,12Z)-octadecadienoate + O2 = (9S)-hydroperoxy-(10E,12Z)-octadecadienoate. It functions in the pathway lipid metabolism; oxylipin biosynthesis. Its function is as follows. Plant lipoxygenase may be involved in a number of diverse aspects of plant physiology including growth and development, pest resistance, and senescence or responses to wounding. It catalyzes the hydroperoxidation of lipids containing a cis,cis-1,4-pentadiene structure. This is Linoleate 9S-lipoxygenase A (LOX1.1) from Solanum lycopersicum (Tomato).